We begin with the raw amino-acid sequence, 207 residues long: Urease accessory protein UreE (207 aa).

The segment covering glutamate 170 to histidine 194 has biased composition (basic and acidic residues). Residues glutamate 170–arginine 207 form a disordered region.

This sequence belongs to the UreE family.

Its subcellular location is the cytoplasm. Its function is as follows. Involved in urease metallocenter assembly. Binds nickel. Probably functions as a nickel donor during metallocenter assembly. The sequence is that of Urease accessory protein UreE from Burkholderia pseudomallei (strain 1106a).